The following is a 258-amino-acid chain: Electron transfer flavoprotein beta subunit lysine methyltransferase (258 aa).

This sequence belongs to the methyltransferase superfamily. ETFBKMT family.

The protein localises to the cytoplasm. It localises to the mitochondrion matrix. The enzyme catalyses L-lysyl-[protein] + 3 S-adenosyl-L-methionine = N(6),N(6),N(6)-trimethyl-L-lysyl-[protein] + 3 S-adenosyl-L-homocysteine + 3 H(+). In terms of biological role, protein-lysine methyltransferase that selectively trimethylates the flavoprotein ETFB in mitochondria. Thereby, may negatively regulate the function of ETFB in electron transfer from Acyl-CoA dehydrogenases to the main respiratory chain. This chain is Electron transfer flavoprotein beta subunit lysine methyltransferase, found in Danio rerio (Zebrafish).